A 250-amino-acid polypeptide reads, in one-letter code: UPF0014 membrane protein YjkA (250 aa).

Transmembrane regions (helical) follow at residues 3 to 23, 32 to 52, 57 to 77, 91 to 111, 117 to 137, and 214 to 234; these read YLSLSLTMIFVLIALFLSKSF, IIATIRAAVQLLIIGYVLSLI, HPVFILLMVLLMLAVAAQNVI, FAALAIVEIVTQGILLSLHII, YVIPISGMVIGNSMVLSSLFL, and LLIVFTTMASAALTCVILSVL.

This sequence belongs to the UPF0014 family.

The protein localises to the cell membrane. The polypeptide is UPF0014 membrane protein YjkA (yjkA) (Bacillus subtilis (strain 168)).